We begin with the raw amino-acid sequence, 185 residues long: Elongation factor P (185 aa).

Belongs to the elongation factor P family.

Its subcellular location is the cytoplasm. Its pathway is protein biosynthesis; polypeptide chain elongation. Its function is as follows. Involved in peptide bond synthesis. Stimulates efficient translation and peptide-bond synthesis on native or reconstituted 70S ribosomes in vitro. Probably functions indirectly by altering the affinity of the ribosome for aminoacyl-tRNA, thus increasing their reactivity as acceptors for peptidyl transferase. The polypeptide is Elongation factor P (Burkholderia ambifaria (strain MC40-6)).